A 401-amino-acid polypeptide reads, in one-letter code: Argininosuccinate synthase (401 aa).

Residues Ala9–Ser17 and Ala36 contribute to the ATP site. The L-citrulline site is built by Tyr87 and Ser92. Position 117 (Gly117) interacts with ATP. Positions 119, 123, and 124 each coordinate L-aspartate. An L-citrulline-binding site is contributed by Asn123. L-citrulline is bound by residues Arg127, Ser176, Ser185, Glu261, and Tyr273.

Belongs to the argininosuccinate synthase family. Type 1 subfamily. Homotetramer.

Its subcellular location is the cytoplasm. The enzyme catalyses L-citrulline + L-aspartate + ATP = 2-(N(omega)-L-arginino)succinate + AMP + diphosphate + H(+). It participates in amino-acid biosynthesis; L-arginine biosynthesis; L-arginine from L-ornithine and carbamoyl phosphate: step 2/3. The polypeptide is Argininosuccinate synthase (Syntrophobacter fumaroxidans (strain DSM 10017 / MPOB)).